The sequence spans 478 residues: ATP synthase subunit beta (478 aa).

Residue 161–168 (GGAGVGKT) participates in ATP binding.

Belongs to the ATPase alpha/beta chains family. F-type ATPases have 2 components, CF(1) - the catalytic core - and CF(0) - the membrane proton channel. CF(1) has five subunits: alpha(3), beta(3), gamma(1), delta(1), epsilon(1). CF(0) has four main subunits: a(1), b(1), b'(1) and c(9-12).

It is found in the cell inner membrane. It carries out the reaction ATP + H2O + 4 H(+)(in) = ADP + phosphate + 5 H(+)(out). In terms of biological role, produces ATP from ADP in the presence of a proton gradient across the membrane. The catalytic sites are hosted primarily by the beta subunits. The polypeptide is ATP synthase subunit beta (Gloeobacter violaceus (strain ATCC 29082 / PCC 7421)).